We begin with the raw amino-acid sequence, 334 residues long: Protein-methionine-sulfoxide reductase catalytic subunit MsrP (334 aa).

Residues 1–44 (MKKNQFLKESDVTAESVFFMKRRQVLKALGISAAALSLPHAAHA) constitute a signal peptide (tat-type signal). Residues N88, 91–92 (YE), C146, T181, N233, R238, and 249–251 (GIK) contribute to the Mo-molybdopterin site.

Belongs to the MsrP family. In terms of assembly, heterodimer of a catalytic subunit (MsrP) and a heme-binding subunit (MsrQ). Mo-molybdopterin is required as a cofactor. Predicted to be exported by the Tat system. The position of the signal peptide cleavage has not been experimentally proven.

The protein localises to the periplasm. The catalysed reaction is L-methionyl-[protein] + a quinone + H2O = L-methionyl-(S)-S-oxide-[protein] + a quinol. It catalyses the reaction L-methionyl-[protein] + a quinone + H2O = L-methionyl-(R)-S-oxide-[protein] + a quinol. Functionally, part of the MsrPQ system that repairs oxidized periplasmic proteins containing methionine sulfoxide residues (Met-O), using respiratory chain electrons. Thus protects these proteins from oxidative-stress damage caused by reactive species of oxygen and chlorine generated by the host defense mechanisms. MsrPQ is essential for the maintenance of envelope integrity under bleach stress, rescuing a wide series of structurally unrelated periplasmic proteins from methionine oxidation, including the primary periplasmic chaperone SurA and the lipoprotein Pal. The catalytic subunit MsrP is non-stereospecific, being able to reduce both (R-) and (S-) diastereoisomers of methionine sulfoxide. The sequence is that of Protein-methionine-sulfoxide reductase catalytic subunit MsrP from Escherichia coli O81 (strain ED1a).